A 147-amino-acid polypeptide reads, in one-letter code: Ubiquitin-conjugating enzyme E2 D4 (147 aa).

One can recognise a UBC core domain in the interval 1–147 (MALKRIQKEL…AREWTQKYAM (147 aa)). The Glycyl thioester intermediate role is filled by Cys85.

The protein belongs to the ubiquitin-conjugating enzyme family.

The enzyme catalyses S-ubiquitinyl-[E1 ubiquitin-activating enzyme]-L-cysteine + [E2 ubiquitin-conjugating enzyme]-L-cysteine = [E1 ubiquitin-activating enzyme]-L-cysteine + S-ubiquitinyl-[E2 ubiquitin-conjugating enzyme]-L-cysteine.. It functions in the pathway protein modification; protein ubiquitination. Functionally, accepts ubiquitin from the E1 complex and catalyzes its covalent attachment to other proteins. In vitro able to promote polyubiquitination using all 7 ubiquitin Lys residues, but may prefer 'Lys-11' and 'Lys-48'-linked polyubiquitination. The sequence is that of Ubiquitin-conjugating enzyme E2 D4 (UBE2D4) from Homo sapiens (Human).